A 256-amino-acid polypeptide reads, in one-letter code: METYVNKLHEGSTYTAAVQYNVLEKDDDPASLTIWVPMFQSSMPADLLIKELANVNILVKQISTPKGPSLRVMINSRSAVLAQMPSKFTICANVSLDERSKLAYDVTTPCEIKACSLTCLKSKNMLTTVKDLTMKTLNPTHDIIALCEFENIVTSKKVIIPTYLRSISVRNKDLNTLENITTTEFKNAITNAKIIPYSGLLLVITVTDNKGAFKYIKPQSQFIVDLGAYLEKESIYYVTTNWKHTATRFAIKPMED.

Residues 1-110 (METYVNKLHE…KLAYDVTTPC (110 aa)) are interaction with M2-1. The nuclear targeting and binding to host importin KPNB1 stretch occupies residues 110 to 183 (CEIKACSLTC…LNTLENITTT (74 aa)). A Nuclear export signal motif is present at residues 194 to 206 (IIPYSGLLLVITV). Thr-205 carries the phosphothreonine; by host CK2 modification.

The protein belongs to the pneumovirinae M protein family. As to quaternary structure, forms dimers. Forms higher-order oligomers. Interacts with glycoprotein G (via N-terminus). Interacts with protein M2-1; this interaction directs the matrix protein localization to cytoplasmic inclusions comprising viral proteins L, N, P, and M2-1 and mediates the matrix protein association with the nucleocapsid. Interacts with host importin KPNB1; this interaction mediates nuclear import of the matrix protein early during infection. Interacts with host AP3M1; this interaction plays an essential role in trafficking the matrix protein in host cells. Interacts with host CAV1; this interaction probably facilitates viral budding. Interacts with host CFL1; this interaction probably facilitates viral replication. Interacts with host ZNF502; this interaction probably facilitates viral release. Interacts with host RACK1. In terms of processing, phosphorylation is important for oligomerization.

Its subcellular location is the virion. The protein resides in the host cytoplasm. It is found in the host nucleus. It localises to the host cell membrane. In terms of biological role, plays a crucial role in virus assembly into filaments and budding. Early in infection, localizes in the nucleus where it inhibits host cell transcription through direct binding to host chromatin. Later in infection, traffics to the cytoplasm through the action of host CRM1 to associate with inclusion bodies, the site of viral transcription and replication. During virus assembly and budding, acts as a bridge between the nucleocapsid and the lipid bilayer. Also plays a role in the inhibition of host interferon-beta response in a RACK1-dependent manner. This is Matrix protein (M) from Homo sapiens (Human).